A 1019-amino-acid chain; its full sequence is Photoactivated adenylate cyclase subunit alpha (1019 aa).

One can recognise a BLUF 1 domain in the interval 55–148 (LRRLMYLSAS…GRMYGEWHMK (94 aa)). One can recognise a Guanylate cyclase 1 domain in the interval 204–332 (VVTFIYLVEF…DCINTASRIT (129 aa)). Residues 467–559 (LITLTYISQA…RVYGSPLDMT (93 aa)) form the BLUF 2 domain. Residues 615-744 (VMLATDICSF…EVSARVMEVE (130 aa)) enclose the Guanylate cyclase 2 domain. The disordered stretch occupies residues 822–861 (GTNAPGRGAPAGGIPSSPKVRPPGRTNSVSSYTPDPNEAL). Residues 825–839 (APGRGAPAGGIPSSP) are compositionally biased toward low complexity. The span at 846–855 (RTNSVSSYTP) shows a compositional bias: polar residues.

It belongs to the adenylyl cyclase class-4/guanylyl cyclase family. Heterotetramer of two alpha and two beta subunits. FAD is required as a cofactor.

The protein resides in the cell projection. Its subcellular location is the cilium. The protein localises to the flagellum. It catalyses the reaction ATP = 3',5'-cyclic AMP + diphosphate. With respect to regulation, activity increased by up to 80-fold under blue light. In terms of biological role, acts as a blue light photoreceptor for the step-up photophobic response. Mediates photoavoidance. The polypeptide is Photoactivated adenylate cyclase subunit alpha (Euglena gracilis).